The chain runs to 520 residues: GMP synthase [glutamine-hydrolyzing] (520 aa).

One can recognise a Glutamine amidotransferase type-1 domain in the interval 12-205 (KIIVLDYGSQ…AISICGARGD (194 aa)). Cysteine 89 serves as the catalytic Nucleophile. Active-site residues include histidine 179 and glutamate 181. Residues 206–395 (WSMDNFIDME…LGMPEEIVWR (190 aa)) enclose the GMPS ATP-PPase domain. 233 to 239 (SGGVDSS) lines the ATP pocket.

As to quaternary structure, homodimer.

The enzyme catalyses XMP + L-glutamine + ATP + H2O = GMP + L-glutamate + AMP + diphosphate + 2 H(+). It participates in purine metabolism; GMP biosynthesis; GMP from XMP (L-Gln route): step 1/1. Catalyzes the synthesis of GMP from XMP. The polypeptide is GMP synthase [glutamine-hydrolyzing] (Streptococcus pyogenes serotype M3 (strain SSI-1)).